A 435-amino-acid polypeptide reads, in one-letter code: MTNENNNDSEFAELKIRGKIFKLPILKASIGEDVIDISRVSAEADCFTYDPGFMSTASCQSTITYIDGDKGILRHRGYDIKDLAEKSDFLEVAYLLIYGELPSGEQYNNFTKQVAHHSLVNERLHYLFQTFCSSSHPMAIMLAAVGSLSAFYPDLLNFKEADYELTAIRMIAKIPTIAAMSYKYSIGQPFIYPDNSLDFTENFLHMMFATPCTKYTVNPIIKNALNKIFILHADHEQNASTSTVRIAGSSGANPFACISTGIASLWGPAHGGANEAVINMLKEIGSSEYIPKYIAKAKDKNDPFRLMGFGHRVYKNYDPRAAVLKETCKEVLKELGQLDNNPLLQIAIELEAIALKDEYFIERKLYPNVDFYSGIIYKAMGIPSQMFTVLFAIARTVGWMAQWKEMHEDPEQKISRPRQLYTGYVHREYKGIRER.

Residues histidine 311 and aspartate 370 contribute to the active site.

Belongs to the citrate synthase family.

The enzyme catalyses oxaloacetate + acetyl-CoA + H2O = citrate + CoA + H(+). It functions in the pathway carbohydrate metabolism; tricarboxylic acid cycle; isocitrate from oxaloacetate: step 1/2. The protein is Citrate synthase (gltA) of Rickettsia slovaca (strain 13-B).